The following is a 475-amino-acid chain: Aspartyl/glutamyl-tRNA(Asn/Gln) amidotransferase subunit B (475 aa).

It belongs to the GatB/GatE family. GatB subfamily. Heterotrimer of A, B and C subunits.

The enzyme catalyses L-glutamyl-tRNA(Gln) + L-glutamine + ATP + H2O = L-glutaminyl-tRNA(Gln) + L-glutamate + ADP + phosphate + H(+). It carries out the reaction L-aspartyl-tRNA(Asn) + L-glutamine + ATP + H2O = L-asparaginyl-tRNA(Asn) + L-glutamate + ADP + phosphate + 2 H(+). Functionally, allows the formation of correctly charged Asn-tRNA(Asn) or Gln-tRNA(Gln) through the transamidation of misacylated Asp-tRNA(Asn) or Glu-tRNA(Gln) in organisms which lack either or both of asparaginyl-tRNA or glutaminyl-tRNA synthetases. The reaction takes place in the presence of glutamine and ATP through an activated phospho-Asp-tRNA(Asn) or phospho-Glu-tRNA(Gln). The sequence is that of Aspartyl/glutamyl-tRNA(Asn/Gln) amidotransferase subunit B from Helicobacter pylori (strain HPAG1).